Consider the following 430-residue polypeptide: Drebrin-like protein (430 aa).

Residues 4-133 enclose the ADF-H domain; it reads NLSRNGPALQ…EPECIMEKVA (130 aa). Thr-26 is modified (phosphothreonine). Phosphoserine occurs at positions 137 and 160. Lys-176 bears the N6-acetyllysine mark. Residues 176 to 231 adopt a coiled-coil conformation; it reads KDSFWAKAEKEEENRRLEEKRRAEEAQRQLEQERRERELREAARREQRYQEQGGEA. 2 positions are modified to phosphoserine: Ala-183 and Ser-232. The tract at residues 219 to 283 is disordered; the sequence is RREQRYQEQG…SSPQPGKLRS (65 aa). Over residues 233-244 the composition is skewed to polar residues; the sequence is PQRTWEQQQEVV. The span at 245–267 shows a compositional bias: basic and acidic residues; the sequence is SRNRNEQESAVHPREIFKQKERA. Positions 268 to 277 are enriched in polar residues; sequence MSTTSISSPQ. A phosphoserine mark is found at Ser-269, Ser-272, Ser-275, and Ser-283. N6-acetyllysine is present on Lys-288. Thr-291 carries the post-translational modification Phosphothreonine. Residues Tyr-334 and Tyr-344 each carry the phosphotyrosine modification. One can recognise an SH3 domain in the interval 371–430; it reads GQGLCARALYDYQAADDTEISFDPENLITGIEVIDEGWWRGYGPDGHFGMFPANYVELIE.

Belongs to the ABP1 family. In terms of assembly, interacts with SHANK2, SHANK3 and SYN1. Interacts with FGD1 and DNM1. Interacts with ANKRD54. Interacts with COBL. Interacts with WASL and WIPF1. Interacts with MAP4K1 and PRAM1. Degraded by caspases during apoptosis.

Its subcellular location is the cytoplasm. It localises to the cytoskeleton. The protein localises to the cell projection. The protein resides in the lamellipodium. It is found in the ruffle. Its subcellular location is the cell cortex. It localises to the cytosol. The protein localises to the synapse. The protein resides in the perikaryon. It is found in the neuron projection. Its subcellular location is the cell membrane. It localises to the cytoplasmic vesicle. The protein localises to the clathrin-coated vesicle membrane. The protein resides in the golgi apparatus membrane. It is found in the podosome. Its subcellular location is the early endosome. It localises to the dendrite. The protein localises to the postsynaptic density. Its function is as follows. Adapter protein that binds F-actin and DNM1, and thereby plays a role in receptor-mediated endocytosis. Plays a role in the reorganization of the actin cytoskeleton, formation of cell projections, such as neurites, in neuron morphogenesis and synapse formation via its interaction with WASL and COBL. Does not bind G-actin and promote actin polymerization by itself. Required for the formation of organized podosome rosettes. May act as a common effector of antigen receptor-signaling pathways in leukocytes. Acts as a key component of the immunological synapse that regulates T-cell activation by bridging TCRs and the actin cytoskeleton to gene activation and endocytic processes. The protein is Drebrin-like protein (DBNL) of Homo sapiens (Human).